The primary structure comprises 552 residues: MDTKRLILFVIFSFSILMLWDSWQRDQQPPAASQTQTTAQSVEDGSVPQAAKSSASAANQASVPAETGFRLQSAERINVETDLYKASIDTIGGDLRRLELREHKDDEDQTKNFVLMDDQSAPMLYVAQTGLIGNGLPTHKEVFTSESTNYQLAPGEDKLDVRLTWKGDNGVEVHKIYTFRRDSYAIEVSYEIRNNSDTAVDPSVYYQIVHDNQSHQGSYMMPTFTGGAYYTEADKYKKLSFSDMAKTNLSKNASDGWVGLVQHYFVSAWIPEDGLVREFYTKKLSDNVYSIGSVSPLGNIAPGQSVTLKSRLYAGPQTQSELKSVAPGLEYTVDYGWLTVIATPLFWILSSIQKVVHNWGVAIILLTILIKLVFYPLSAASYRSMANMRELAPRLQRLKEQYGDDRQKLHQAMMEMYKTEKINPMGGCLPILVQIPVFIALYWVLLGSVEMRHAPFMLWIQDLSAVDPYYVLPILMGITMIIQTKLNPKPADPIQAKVMTIMPIVFSVFFFFFPAGLVLYWLVNNILSIAQQWYINRSTERAAAKKKGNARR.

The helical transmembrane segment at 3 to 23 (TKRLILFVIFSFSILMLWDSW) threads the bilayer. A disordered region spans residues 29-65 (PPAASQTQTTAQSVEDGSVPQAAKSSASAANQASVPA). Transmembrane regions (helical) follow at residues 359-379 (WGVA…PLSA), 429-449 (LPIL…LGSV), 463-483 (LSAV…MIIQ), and 503-523 (PIVF…YWLV).

It belongs to the OXA1/ALB3/YidC family. Type 1 subfamily. In terms of assembly, interacts with the Sec translocase complex via SecD. Specifically interacts with transmembrane segments of nascent integral membrane proteins during membrane integration.

It localises to the cell inner membrane. Required for the insertion and/or proper folding and/or complex formation of integral membrane proteins into the membrane. Involved in integration of membrane proteins that insert both dependently and independently of the Sec translocase complex, as well as at least some lipoproteins. Aids folding of multispanning membrane proteins. In Methylobacillus flagellatus (strain ATCC 51484 / DSM 6875 / VKM B-1610 / KT), this protein is Membrane protein insertase YidC.